Reading from the N-terminus, the 439-residue chain is Leukocyte immunoglobulin-like receptor subfamily A member 3 (439 aa).

An N-terminal signal peptide occupies residues 1-23; that stretch reads MTPILTVLICLGLSLDPRTHVQA. 4 consecutive Ig-like C2-type domains span residues 27–108, 119–224, 226–315, and 326–415; these read PKPT…AGLS, TGAY…GVSK, PSLS…DPLD, and PFLS…SDPL. An intrachain disulfide couples Cys-49 to Cys-98. Asn-140 carries N-linked (GlcNAc...) asparagine glycosylation. Cystine bridges form between Cys-145–Cys-197, Cys-157–Cys-167, and Cys-246–Cys-297. N-linked (GlcNAc...) asparagine glycans are attached at residues Asn-281, Asn-302, and Asn-341. Cysteines 346 and 397 form a disulfide. Asn-431 carries an N-linked (GlcNAc...) asparagine glycan.

In terms of processing, N-glycosylation is required for ligand binding. Detected in B-cells, and at lower levels in natural killer (NK) cells. Detected in peripheral blood monocytes and lung.

It localises to the secreted. In terms of biological role, acts as a soluble receptor for class I MHC antigens. Binds both classical and non-classical HLA class I molecules but with reduced affinities compared to LILRB1 or LILRB2. Binds with high affinity to the surface of monocytes, leading to abolish LPS-induced TNF-alpha production by monocytes. The polypeptide is Leukocyte immunoglobulin-like receptor subfamily A member 3 (LILRA3) (Homo sapiens (Human)).